The following is a 462-amino-acid chain: Toxin CqTX-A (462 aa).

Residues 1–19 form the signal peptide; that stretch reads MANMLYFSLLALLFMTGIA. Asn-174 carries N-linked (GlcNAc...) asparagine glycosylation.

This sequence belongs to the jellyfish toxin family. Type I subfamily. Post-translationally, contains disulfide bonds. In terms of processing, N-glycosylated.

It localises to the secreted. Its subcellular location is the nematocyst. The protein localises to the target cell membrane. Critical allergen and main toxic protein of C.quadrigatus venom. Has potent hemolytic activity. Is lethal to crayfish. Causes cutaneous inflammation in humans. May act as a pore-forming toxin, disrupting normal transmembrane ion concentration gradients in susceptible cells. The chain is Toxin CqTX-A from Chiropsoides quadrigatus (Box jellyfish).